The chain runs to 323 residues: Ficolin-2 (323 aa).

A signal peptide spans 1–26; the sequence is MDTRGVAAAMRPLVLLVAFLCTAAPA. A Collagen-like domain is found at 52-102; the sequence is GLPGAAGPKGEAGASGPKGGQGPPGAPGEPGPPGPKGDRGEKGEPGPKGES. The segment covering 55 to 66 has biased composition (low complexity); that stretch reads GAAGPKGEAGAS. The tract at residues 55–107 is disordered; that stretch reads GAAGPKGEAGASGPKGGQGPPGAPGEPGPPGPKGDRGEKGEPGPKGESWETEQ. A compositionally biased stretch (pro residues) spans 75-86; sequence PGAPGEPGPPGP. The span at 87–102 shows a compositional bias: basic and acidic residues; sequence KGDRGEKGEPGPKGES. The Fibrinogen C-terminal domain occupies 106–323; it reads EQCLTGPRTC…KVSEMKFRAT (218 aa). 2 disulfides stabilise this stretch: cysteine 108/cysteine 136 and cysteine 115/cysteine 143. A glycan (N-linked (GlcNAc...) asparagine) is linked at asparagine 249. Aspartate 259, aspartate 261, and serine 265 together coordinate Ca(2+). A disulfide bridge links cysteine 267 with cysteine 280. 2 N-linked (GlcNAc...) asparagine glycosylation sites follow: asparagine 302 and asparagine 310.

Belongs to the ficolin lectin family. In terms of assembly, homotrimer. Interacts with elastin. Interacts with MASP1 and MASP2. In terms of tissue distribution, mainly expressed in skeletal muscle.

It localises to the secreted. Functionally, may function in innate immunity through activation of the lectin complement pathway. Calcium-dependent and GlcNAc-binding lectin. The sequence is that of Ficolin-2 (FCN2) from Sus scrofa (Pig).